A 185-amino-acid chain; its full sequence is Ribosome-recycling factor (185 aa).

The disordered stretch occupies residues 137 to 166 (DGLKKAEKDGDIGQDESRGQSEKVQKMTDD).

It belongs to the RRF family.

It is found in the cytoplasm. Responsible for the release of ribosomes from messenger RNA at the termination of protein biosynthesis. May increase the efficiency of translation by recycling ribosomes from one round of translation to another. The protein is Ribosome-recycling factor of Agrobacterium fabrum (strain C58 / ATCC 33970) (Agrobacterium tumefaciens (strain C58)).